Reading from the N-terminus, the 940-residue chain is Isoleucine--tRNA ligase (940 aa).

A 'HIGH' region motif is present at residues Pro-58–His-68. Residue Glu-564 participates in L-isoleucyl-5'-AMP binding. The short motif at Lys-605 to Ser-609 is the 'KMSKS' region element. Lys-608 lines the ATP pocket. The Zn(2+) site is built by Cys-903, Cys-906, Cys-923, and Cys-926.

The protein belongs to the class-I aminoacyl-tRNA synthetase family. IleS type 1 subfamily. In terms of assembly, monomer. Zn(2+) is required as a cofactor.

The protein localises to the cytoplasm. The enzyme catalyses tRNA(Ile) + L-isoleucine + ATP = L-isoleucyl-tRNA(Ile) + AMP + diphosphate. Functionally, catalyzes the attachment of isoleucine to tRNA(Ile). As IleRS can inadvertently accommodate and process structurally similar amino acids such as valine, to avoid such errors it has two additional distinct tRNA(Ile)-dependent editing activities. One activity is designated as 'pretransfer' editing and involves the hydrolysis of activated Val-AMP. The other activity is designated 'posttransfer' editing and involves deacylation of mischarged Val-tRNA(Ile). The protein is Isoleucine--tRNA ligase of Shewanella woodyi (strain ATCC 51908 / MS32).